Here is a 733-residue protein sequence, read N- to C-terminus: Acyl-coenzyme A oxidase (733 aa).

Belongs to the acyl-CoA oxidase family. FAD serves as cofactor.

It is found in the peroxisome. It carries out the reaction a 2,3-saturated acyl-CoA + O2 = a (2E)-enoyl-CoA + H2O2. The protein operates within lipid metabolism; peroxisomal fatty acid beta-oxidation. This Eremothecium gossypii (strain ATCC 10895 / CBS 109.51 / FGSC 9923 / NRRL Y-1056) (Yeast) protein is Acyl-coenzyme A oxidase (POX1).